Consider the following 398-residue polypeptide: 8-amino-7-oxononanoate synthase (398 aa).

Residue arginine 26 participates in substrate binding. 113–114 (GF) provides a ligand contact to pyridoxal 5'-phosphate. A substrate-binding site is contributed by histidine 138. Pyridoxal 5'-phosphate is bound by residues serine 181, histidine 209, and threonine 238. Lysine 241 carries the N6-(pyridoxal phosphate)lysine modification. Threonine 355 is a substrate binding site.

It belongs to the class-II pyridoxal-phosphate-dependent aminotransferase family. BioF subfamily. Homodimer. Requires pyridoxal 5'-phosphate as cofactor.

The enzyme catalyses 6-carboxyhexanoyl-[ACP] + L-alanine + H(+) = (8S)-8-amino-7-oxononanoate + holo-[ACP] + CO2. It functions in the pathway cofactor biosynthesis; biotin biosynthesis. Its function is as follows. Catalyzes the decarboxylative condensation of pimeloyl-[acyl-carrier protein] and L-alanine to produce 8-amino-7-oxononanoate (AON), [acyl-carrier protein], and carbon dioxide. The chain is 8-amino-7-oxononanoate synthase from Aeromonas hydrophila subsp. hydrophila (strain ATCC 7966 / DSM 30187 / BCRC 13018 / CCUG 14551 / JCM 1027 / KCTC 2358 / NCIMB 9240 / NCTC 8049).